The following is a 377-amino-acid chain: Probable tRNA pseudouridine synthase D (377 aa).

Asp89 (nucleophile) is an active-site residue. Residues Tyr160–Thr377 enclose the TRUD domain.

This sequence belongs to the pseudouridine synthase TruD family.

The enzyme catalyses uridine(13) in tRNA = pseudouridine(13) in tRNA. Functionally, could be responsible for synthesis of pseudouridine from uracil-13 in transfer RNAs. The sequence is that of Probable tRNA pseudouridine synthase D from Saccharolobus solfataricus (strain ATCC 35092 / DSM 1617 / JCM 11322 / P2) (Sulfolobus solfataricus).